The chain runs to 83 residues: Retinal cone rhodopsin-sensitive cGMP 3',5'-cyclic phosphodiesterase subunit gamma (83 aa).

Residues 1–54 (MSDSPSLSPPAPSQGPTTPRKGPPKFKQRQTRQFKSKPPKKGVKGFGDDIPGME) form a disordered region. Residues 22 to 43 (GPPKFKQRQTRQFKSKPPKKGV) are compositionally biased toward basic residues.

The protein belongs to the rod/cone cGMP-PDE gamma subunit family. As to quaternary structure, tetramer composed of two catalytic chains (alpha and beta), and two inhibitory chains (gamma).

The catalysed reaction is 3',5'-cyclic GMP + H2O = GMP + H(+). Its function is as follows. Participates in processes of transmission and amplification of the visual signal. cGMP-PDEs are the effector molecules in G-protein-mediated phototransduction in vertebrate rods and cones. The sequence is that of Retinal cone rhodopsin-sensitive cGMP 3',5'-cyclic phosphodiesterase subunit gamma (Pde6h) from Mus musculus (Mouse).